The primary structure comprises 604 residues: Glutamine--fructose-6-phosphate aminotransferase [isomerizing] (604 aa).

The Nucleophile; for GATase activity role is filled by cysteine 2. One can recognise a Glutamine amidotransferase type-2 domain in the interval 2 to 218 (CGIVGVVGNR…DKELVILTKD (217 aa)). SIS domains are found at residues 284 to 423 (IVKT…ANGK) and 456 to 594 (VEKL…VDKP). Lysine 599 (for Fru-6P isomerization activity) is an active-site residue.

Homodimer.

The protein resides in the cytoplasm. It catalyses the reaction D-fructose 6-phosphate + L-glutamine = D-glucosamine 6-phosphate + L-glutamate. Its function is as follows. Catalyzes the first step in hexosamine metabolism, converting fructose-6P into glucosamine-6P using glutamine as a nitrogen source. The chain is Glutamine--fructose-6-phosphate aminotransferase [isomerizing] from Streptococcus pyogenes serotype M6 (strain ATCC BAA-946 / MGAS10394).